Consider the following 240-residue polypeptide: Uridylate kinase (240 aa).

Residue 12–15 (KLSG) participates in ATP binding. The tract at residues 20–25 (GEKGFG) is involved in allosteric activation by GTP. Glycine 54 serves as a coordination point for UMP. ATP-binding residues include glycine 55 and arginine 59. UMP-binding positions include aspartate 74 and 135–142 (TGSPYFST). Residues asparagine 163, tyrosine 169, and aspartate 172 each contribute to the ATP site.

The protein belongs to the UMP kinase family. As to quaternary structure, homohexamer.

It is found in the cytoplasm. The enzyme catalyses UMP + ATP = UDP + ADP. The protein operates within pyrimidine metabolism; CTP biosynthesis via de novo pathway; UDP from UMP (UMPK route): step 1/1. Its activity is regulated as follows. Allosterically activated by GTP. Inhibited by UTP. In terms of biological role, catalyzes the reversible phosphorylation of UMP to UDP. The chain is Uridylate kinase from Lactiplantibacillus plantarum (strain ATCC BAA-793 / NCIMB 8826 / WCFS1) (Lactobacillus plantarum).